The following is a 516-amino-acid chain: Arabinose import ATP-binding protein AraG (516 aa).

ABC transporter domains are found at residues 5 to 240 (LRFD…MVGR) and 240 to 497 (REIS…LPQS). 37-44 (GENGAGKS) lines the ATP pocket.

This sequence belongs to the ABC transporter superfamily. Arabinose importer (TC 3.A.1.2.2) family. The complex is composed of two ATP-binding proteins (AraG), two transmembrane proteins (AraH) and a solute-binding protein (AraF).

The protein localises to the cell inner membrane. The enzyme catalyses L-arabinose(out) + ATP + H2O = L-arabinose(in) + ADP + phosphate + H(+). Its function is as follows. Part of the ABC transporter complex AraFGH involved in arabinose import. Responsible for energy coupling to the transport system. The protein is Arabinose import ATP-binding protein AraG of Paraburkholderia xenovorans (strain LB400).